The chain runs to 486 residues: Bifunctional protein HldE (486 aa).

The interval 1–331 is ribokinase; that stretch reads MSTNVADLLH…NALTAESVPV (331 aa). Residue 207 to 210 coordinates ATP; it reads NLGE. Aspartate 276 is a catalytic residue. Positions 358 to 486 are cytidylyltransferase; the sequence is VTNGCFDLLH…STTKLIEKGH (129 aa).

The protein in the N-terminal section; belongs to the carbohydrate kinase PfkB family. This sequence in the C-terminal section; belongs to the cytidylyltransferase family. Homodimer.

It carries out the reaction D-glycero-beta-D-manno-heptose 7-phosphate + ATP = D-glycero-beta-D-manno-heptose 1,7-bisphosphate + ADP + H(+). The enzyme catalyses D-glycero-beta-D-manno-heptose 1-phosphate + ATP + H(+) = ADP-D-glycero-beta-D-manno-heptose + diphosphate. The protein operates within nucleotide-sugar biosynthesis; ADP-L-glycero-beta-D-manno-heptose biosynthesis; ADP-L-glycero-beta-D-manno-heptose from D-glycero-beta-D-manno-heptose 7-phosphate: step 1/4. It participates in nucleotide-sugar biosynthesis; ADP-L-glycero-beta-D-manno-heptose biosynthesis; ADP-L-glycero-beta-D-manno-heptose from D-glycero-beta-D-manno-heptose 7-phosphate: step 3/4. In terms of biological role, catalyzes the phosphorylation of D-glycero-D-manno-heptose 7-phosphate at the C-1 position to selectively form D-glycero-beta-D-manno-heptose-1,7-bisphosphate. Its function is as follows. Catalyzes the ADP transfer from ATP to D-glycero-beta-D-manno-heptose 1-phosphate, yielding ADP-D-glycero-beta-D-manno-heptose. The sequence is that of Bifunctional protein HldE from Koribacter versatilis (strain Ellin345).